A 94-amino-acid polypeptide reads, in one-letter code: Small ribosomal subunit protein bS6 (94 aa).

It belongs to the bacterial ribosomal protein bS6 family.

Its function is as follows. Binds together with bS18 to 16S ribosomal RNA. The chain is Small ribosomal subunit protein bS6 from Alkaliphilus metalliredigens (strain QYMF).